The following is a 494-amino-acid chain: Sulfate adenylyltransferase subunit 1 (494 aa).

The tr-type G domain maps to 24-240; that stretch reads TRPLRLITCG…LELATVRSAQ (217 aa). The tract at residues 33–40 is G1; that stretch reads GSVDDGKS. Residue 33-40 coordinates GTP; sequence GSVDDGKS. Residues 91 to 95 are G2; it reads GITID. The G3 stretch occupies residues 112 to 115; it reads DTPG. Residues 112-116 and 167-170 contribute to the GTP site; these read DTPGH and NKID. A G4 region spans residues 167 to 170; that stretch reads NKID. The tract at residues 204–206 is G5; sequence SAL.

It belongs to the TRAFAC class translation factor GTPase superfamily. Classic translation factor GTPase family. CysN/NodQ subfamily. As to quaternary structure, heterodimer composed of CysD, the smaller subunit, and CysN.

It catalyses the reaction sulfate + ATP + H(+) = adenosine 5'-phosphosulfate + diphosphate. Its pathway is sulfur metabolism; hydrogen sulfide biosynthesis; sulfite from sulfate: step 1/3. In terms of biological role, with CysD forms the ATP sulfurylase (ATPS) that catalyzes the adenylation of sulfate producing adenosine 5'-phosphosulfate (APS) and diphosphate, the first enzymatic step in sulfur assimilation pathway. APS synthesis involves the formation of a high-energy phosphoric-sulfuric acid anhydride bond driven by GTP hydrolysis by CysN coupled to ATP hydrolysis by CysD. This chain is Sulfate adenylyltransferase subunit 1, found in Rhizobium tropici.